Consider the following 301-residue polypeptide: Polyamine aminopropyltransferase (301 aa).

In terms of domain architecture, PABS spans 4–240 (WHWLLEWQTP…GLWGFVYGGV (237 aa)). Gln33 contributes to the S-methyl-5'-thioadenosine binding site. Spermidine is bound by residues His64 and Glu89. Residues Asp109 and 141-142 (DG) each bind S-methyl-5'-thioadenosine. Catalysis depends on Asp159, which acts as the Proton acceptor.

It belongs to the spermidine/spermine synthase family. Homodimer or homotetramer.

Its subcellular location is the cytoplasm. The catalysed reaction is S-adenosyl 3-(methylsulfanyl)propylamine + putrescine = S-methyl-5'-thioadenosine + spermidine + H(+). The protein operates within amine and polyamine biosynthesis; spermidine biosynthesis; spermidine from putrescine: step 1/1. Its function is as follows. Catalyzes the irreversible transfer of a propylamine group from the amino donor S-adenosylmethioninamine (decarboxy-AdoMet) to putrescine (1,4-diaminobutane) to yield spermidine. This chain is Polyamine aminopropyltransferase, found in Saccharolobus islandicus (strain Y.N.15.51 / Yellowstone #2) (Sulfolobus islandicus).